The sequence spans 343 residues: S-adenosylmethionine:tRNA ribosyltransferase-isomerase (343 aa).

The protein belongs to the QueA family. In terms of assembly, monomer.

It localises to the cytoplasm. The enzyme catalyses 7-aminomethyl-7-carbaguanosine(34) in tRNA + S-adenosyl-L-methionine = epoxyqueuosine(34) in tRNA + adenine + L-methionine + 2 H(+). It functions in the pathway tRNA modification; tRNA-queuosine biosynthesis. Its function is as follows. Transfers and isomerizes the ribose moiety from AdoMet to the 7-aminomethyl group of 7-deazaguanine (preQ1-tRNA) to give epoxyqueuosine (oQ-tRNA). The sequence is that of S-adenosylmethionine:tRNA ribosyltransferase-isomerase from Coxiella burnetii (strain Dugway 5J108-111).